A 149-amino-acid chain; its full sequence is Nascent polypeptide-associated complex subunit beta-2 (149 aa).

The 66-residue stretch at 38–103 (DKDNTKLQAE…PKENTLNGLY (66 aa)) folds into the NAC-A/B domain.

It belongs to the NAC-beta family. Part of the nascent polypeptide-associated complex (NAC), consisting of EGD2 and either EGD1 or BTT1. NAC associates with ribosomes via EGD1 or BTT1.

The protein localises to the cytoplasm. It localises to the nucleus. Functionally, acts as a component of the nascent polypeptide-associated complex (NAC), which promotes mitochondrial protein import by enhancing productive ribosome interactions with the outer mitochondrial membrane. Also blocks the inappropriate interaction of ribosomes translating non-secretory nascent polypeptides with translocation sites in the membrane of the endoplasmic reticulum. BTT1 may act as a transcription factor that exert a negative effect on the expression of several genes that are transcribed by RNA polymerase II. This is Nascent polypeptide-associated complex subunit beta-2 (BTT1) from Saccharomyces cerevisiae (strain ATCC 204508 / S288c) (Baker's yeast).